The primary structure comprises 520 residues: EGF domain-specific O-linked N-acetylglucosamine transferase (520 aa).

Positions 1-16 (MPILPILIGILHLSLA) are cleaved as a signal peptide. N-linked (GlcNAc...) asparagine glycans are attached at residues Asn-52, Asn-176, and Asn-250. The short motif at 292-294 (DVE) is the Required for optimal activity element. The N-linked (GlcNAc...) asparagine glycan is linked to Asn-479. The Prevents secretion from ER signature appears at 517 to 520 (RNEL).

Requires a divalent metal cation as cofactor.

The protein resides in the endoplasmic reticulum lumen. The catalysed reaction is L-seryl-[protein] + UDP-N-acetyl-alpha-D-glucosamine = 3-O-(N-acetyl-beta-D-glucosaminyl)-L-seryl-[protein] + UDP + H(+). It catalyses the reaction L-threonyl-[protein] + UDP-N-acetyl-alpha-D-glucosamine = 3-O-(N-acetyl-beta-D-glucosaminyl)-L-threonyl-[protein] + UDP + H(+). In terms of biological role, catalyzes the transfer of a single N-acetylglucosamine from UDP-GlcNAc to a serine or threonine residue in extracellular proteins resulting in their modification with a beta-linked N-acetylglucosamine (O-GlcNAc). Specifically glycosylates the Thr residue located between the fifth and sixth conserved cysteines of folded EGF-like domains. Involved in epithelial cell adhesion/interaction with the extracellular matrix by mediating glycosylation of proteins in the secretory pathway, such as Dumpy (Dp). This chain is EGF domain-specific O-linked N-acetylglucosamine transferase (Eogt), found in Drosophila melanogaster (Fruit fly).